Reading from the N-terminus, the 510-residue chain is ATP synthase subunit alpha (510 aa).

An ATP-binding site is contributed by 169-176 (GDRQTGKT).

The protein belongs to the ATPase alpha/beta chains family. In terms of assembly, F-type ATPases have 2 components, CF(1) - the catalytic core - and CF(0) - the membrane proton channel. CF(1) has five subunits: alpha(3), beta(3), gamma(1), delta(1), epsilon(1). CF(0) has four main subunits: a(1), b(1), b'(1) and c(9-12).

It is found in the cell inner membrane. The catalysed reaction is ATP + H2O + 4 H(+)(in) = ADP + phosphate + 5 H(+)(out). Its function is as follows. Produces ATP from ADP in the presence of a proton gradient across the membrane. The alpha chain is a regulatory subunit. The protein is ATP synthase subunit alpha of Rhodospirillum rubrum (strain ATCC 11170 / ATH 1.1.1 / DSM 467 / LMG 4362 / NCIMB 8255 / S1).